Consider the following 323-residue polypeptide: tRNA-dihydrouridine(16) synthase (323 aa).

Residues 7–9 (PME) and glutamine 68 contribute to the FMN site. Cysteine 98 serves as the catalytic Proton donor. FMN is bound by residues lysine 139, 199-201 (NGE), and 223-224 (GR).

This sequence belongs to the Dus family. DusC subfamily. Requires FMN as cofactor.

The enzyme catalyses 5,6-dihydrouridine(16) in tRNA + NADP(+) = uridine(16) in tRNA + NADPH + H(+). It catalyses the reaction 5,6-dihydrouridine(16) in tRNA + NAD(+) = uridine(16) in tRNA + NADH + H(+). In terms of biological role, catalyzes the synthesis of 5,6-dihydrouridine (D), a modified base found in the D-loop of most tRNAs, via the reduction of the C5-C6 double bond in target uridines. Specifically modifies U16 in tRNAs. The protein is tRNA-dihydrouridine(16) synthase of Pseudomonas putida (strain ATCC 47054 / DSM 6125 / CFBP 8728 / NCIMB 11950 / KT2440).